The primary structure comprises 147 residues: D-aminoacyl-tRNA deacylase (147 aa).

Positions 136-137 match the Gly-cisPro motif, important for rejection of L-amino acids motif; sequence GP.

It belongs to the DTD family. As to quaternary structure, homodimer.

Its subcellular location is the cytoplasm. It catalyses the reaction glycyl-tRNA(Ala) + H2O = tRNA(Ala) + glycine + H(+). The enzyme catalyses a D-aminoacyl-tRNA + H2O = a tRNA + a D-alpha-amino acid + H(+). In terms of biological role, an aminoacyl-tRNA editing enzyme that deacylates mischarged D-aminoacyl-tRNAs. Also deacylates mischarged glycyl-tRNA(Ala), protecting cells against glycine mischarging by AlaRS. Acts via tRNA-based rather than protein-based catalysis; rejects L-amino acids rather than detecting D-amino acids in the active site. By recycling D-aminoacyl-tRNA to D-amino acids and free tRNA molecules, this enzyme counteracts the toxicity associated with the formation of D-aminoacyl-tRNA entities in vivo and helps enforce protein L-homochirality. The sequence is that of D-aminoacyl-tRNA deacylase from Streptococcus pyogenes serotype M1.